The chain runs to 113 residues: U11-theraphotoxin-Hhn1a (113 aa).

The signal sequence occupies residues Met-1 to Thr-21. Positions Asp-22–Arg-74 are excised as a propeptide. Disulfide bonds link Cys-75–Cys-90, Cys-82–Cys-95, and Cys-89–Cys-110.

The protein belongs to the neurotoxin 14 (magi-1) family. 01 (HNTX-16) subfamily. Expressed by the venom gland.

The protein resides in the secreted. Functionally, probable ion channel inhibitor. The protein is U11-theraphotoxin-Hhn1a of Cyriopagopus hainanus (Chinese bird spider).